The following is a 398-amino-acid chain: Acetate kinase (398 aa).

Asparagine 7 serves as a coordination point for Mg(2+). Lysine 14 is a binding site for ATP. A substrate-binding site is contributed by arginine 91. Residue aspartate 148 is the Proton donor/acceptor of the active site. ATP contacts are provided by residues 208-212, 282-284, and 330-334; these read HLGNG, DFR, and GVGEN. Mg(2+) is bound at residue glutamate 383.

The protein belongs to the acetokinase family. In terms of assembly, homodimer. Mg(2+) serves as cofactor. Requires Mn(2+) as cofactor.

The protein resides in the cytoplasm. It carries out the reaction acetate + ATP = acetyl phosphate + ADP. Its pathway is metabolic intermediate biosynthesis; acetyl-CoA biosynthesis; acetyl-CoA from acetate: step 1/2. Its function is as follows. Catalyzes the formation of acetyl phosphate from acetate and ATP. Can also catalyze the reverse reaction. In Carboxydothermus hydrogenoformans (strain ATCC BAA-161 / DSM 6008 / Z-2901), this protein is Acetate kinase.